The sequence spans 793 residues: Probable exo-1,4-beta-xylosidase xlnD (793 aa).

The first 20 residues, 1–20 (MPRVASVAAVLAALLPSALG), serve as a signal peptide directing secretion. N-linked (GlcNAc...) asparagine glycosylation is found at Asn23, Asn87, and Asn142. Asp310 is a catalytic residue. Asn326, Asn385, Asn404, Asn440, Asn477, Asn518, Asn559, Asn614, Asn652, Asn679, and Asn701 each carry an N-linked (GlcNAc...) asparagine glycan.

It belongs to the glycosyl hydrolase 3 family.

It is found in the secreted. The catalysed reaction is Hydrolysis of (1-&gt;4)-beta-D-xylans, to remove successive D-xylose residues from the non-reducing termini.. It functions in the pathway glycan degradation; xylan degradation. Its function is as follows. Xylan 1,4-beta-xylosidase involved in the hydrolysis of xylan, a major structural heterogeneous polysaccharide found in plant biomass representing the second most abundant polysaccharide in the biosphere, after cellulose. The polypeptide is Probable exo-1,4-beta-xylosidase xlnD (xlnD) (Aspergillus terreus (strain NIH 2624 / FGSC A1156)).